The sequence spans 242 residues: Ribose-5-phosphate isomerase A (242 aa).

Substrate-binding positions include 39–42 (SGST), 95–98 (DGAD), and 108–111 (KGGG). Catalysis depends on Glu117, which acts as the Proton acceptor. Lys135 serves as a coordination point for substrate.

The protein belongs to the ribose 5-phosphate isomerase family. Homodimer.

The enzyme catalyses aldehydo-D-ribose 5-phosphate = D-ribulose 5-phosphate. It participates in carbohydrate degradation; pentose phosphate pathway; D-ribose 5-phosphate from D-ribulose 5-phosphate (non-oxidative stage): step 1/1. Catalyzes the reversible conversion of ribose-5-phosphate to ribulose 5-phosphate. This Chlamydia trachomatis serovar D (strain ATCC VR-885 / DSM 19411 / UW-3/Cx) protein is Ribose-5-phosphate isomerase A.